Consider the following 707-residue polypeptide: MNQYLAVTSNGMENLLAEELTKLGIENAKPVQAGVKFKATNEQIYRCCLWSRLASRFVRVLSEFTCNDDMDLYLSTSSINWVNQFHSSKRFVVDFNGTNREIRNSQYGAMKVKDGIVDCFEKKGLPRPNISKERPDIRVHVRLHKDKAILGVDMVGSGLHQRGYRPESGRAPLRETLAAAIVMRCGWDGSQPLLDPMCGSGTLLIEAAMMAANMAPGVKRKQWGFEALEDFEPELWAEIKSEANVQARRGVKKVDAKFFGFDNDPNVLKVAQDNARRAGVEELITFAQGDAATITRPAGFEAGVIVSNPPYGERLGTEPGLIALYTAFGGQLKAEFGGCKASIFSSSDELLSCLRMRADKQFKLNNGALPCHQKNYSIAERSADEVKGADTNVQIAPDFSNRLKKNIGKIGKWARKEKLDCYRIYDADLPEYNVAIDVYGDQIVIQEYAAPKNIPEEKAKRRLTDIIRATIQVTGVEANKVVLKVREKQKGLSQYQKLGQVSETLEVNEYGVKLIVNLHDYLDTGLFLDHKITRRRLGEMAQGKDFLNLFAYTGSATVHAAVGGARSTTTVDMSNTYLNWAKDNMQLNGCVGRQHRFEQADCLQWLENAKGEYDLIFIDPPTFSNSKRMETSFDVQRDHIKLMTNLKRLLRAGGAIVFSNNKRHFKMDEAGLAELGLKAQNISSQTLPLDFSRNKQIHNCWLVTHAE.

Positions Gln43–Met154 constitute a THUMP domain.

This sequence belongs to the methyltransferase superfamily. RlmKL family.

The protein resides in the cytoplasm. It carries out the reaction guanosine(2445) in 23S rRNA + S-adenosyl-L-methionine = N(2)-methylguanosine(2445) in 23S rRNA + S-adenosyl-L-homocysteine + H(+). The catalysed reaction is guanosine(2069) in 23S rRNA + S-adenosyl-L-methionine = N(2)-methylguanosine(2069) in 23S rRNA + S-adenosyl-L-homocysteine + H(+). Specifically methylates the guanine in position 2445 (m2G2445) and the guanine in position 2069 (m7G2069) of 23S rRNA. The chain is Ribosomal RNA large subunit methyltransferase K/L from Vibrio campbellii (strain ATCC BAA-1116).